A 257-amino-acid chain; its full sequence is NAD-capped RNA hydrolase NudC (257 aa).

Positions 25 and 69 each coordinate substrate. 2 residues coordinate Zn(2+): C98 and C101. E111 provides a ligand contact to substrate. C116 and C119 together coordinate Zn(2+). Residue Y124 coordinates substrate. Residues 125–248 (PQIAPCIIVA…TVARRLIEDT (124 aa)) form the Nudix hydrolase domain. The a divalent metal cation site is built by A158, E174, and E178. Positions 159–180 (GFVEVGETLEQAVAREVMEESG) match the Nudix box motif. Residue 192–199 (QPWPFPQS) participates in substrate binding. E219 serves as a coordination point for a divalent metal cation. A241 contributes to the substrate binding site.

This sequence belongs to the Nudix hydrolase family. NudC subfamily. In terms of assembly, homodimer. It depends on Mg(2+) as a cofactor. The cofactor is Mn(2+). Zn(2+) is required as a cofactor.

It carries out the reaction a 5'-end NAD(+)-phospho-ribonucleoside in mRNA + H2O = a 5'-end phospho-adenosine-phospho-ribonucleoside in mRNA + beta-nicotinamide D-ribonucleotide + 2 H(+). The catalysed reaction is NAD(+) + H2O = beta-nicotinamide D-ribonucleotide + AMP + 2 H(+). The enzyme catalyses NADH + H2O = reduced beta-nicotinamide D-ribonucleotide + AMP + 2 H(+). Its function is as follows. mRNA decapping enzyme that specifically removes the nicotinamide adenine dinucleotide (NAD) cap from a subset of mRNAs by hydrolyzing the diphosphate linkage to produce nicotinamide mononucleotide (NMN) and 5' monophosphate mRNA. The NAD-cap is present at the 5'-end of some mRNAs and stabilizes RNA against 5'-processing. Has preference for mRNAs with a 5'-end purine. Catalyzes the hydrolysis of a broad range of dinucleotide pyrophosphates. This chain is NAD-capped RNA hydrolase NudC, found in Escherichia coli O45:K1 (strain S88 / ExPEC).